We begin with the raw amino-acid sequence, 80 residues long: MTSRTDETANATALGYEQARDELIEVVRRLEAGGTTLEESLALWERGEELAKVCRTWLEGARKRLDAALAEEENAGDDSE.

Belongs to the XseB family. In terms of assembly, heterooligomer composed of large and small subunits.

It localises to the cytoplasm. The catalysed reaction is Exonucleolytic cleavage in either 5'- to 3'- or 3'- to 5'-direction to yield nucleoside 5'-phosphates.. Bidirectionally degrades single-stranded DNA into large acid-insoluble oligonucleotides, which are then degraded further into small acid-soluble oligonucleotides. This is Exodeoxyribonuclease 7 small subunit from Streptomyces avermitilis (strain ATCC 31267 / DSM 46492 / JCM 5070 / NBRC 14893 / NCIMB 12804 / NRRL 8165 / MA-4680).